A 136-amino-acid polypeptide reads, in one-letter code: Large ribosomal subunit protein eL27A (136 aa).

The protein belongs to the eukaryotic ribosomal protein eL27 family. As to quaternary structure, component of the large ribosomal subunit (LSU). Mature yeast ribosomes consist of a small (40S) and a large (60S) subunit. The 40S small subunit contains 1 molecule of ribosomal RNA (18S rRNA) and at least 33 different proteins. The large 60S subunit contains 3 rRNA molecules (25S, 5.8S and 5S rRNA) and at least 46 different proteins.

The protein localises to the cytoplasm. Its subcellular location is the nucleus. Component of the ribosome, a large ribonucleoprotein complex responsible for the synthesis of proteins in the cell. The small ribosomal subunit (SSU) binds messenger RNAs (mRNAs) and translates the encoded message by selecting cognate aminoacyl-transfer RNA (tRNA) molecules. The large subunit (LSU) contains the ribosomal catalytic site termed the peptidyl transferase center (PTC), which catalyzes the formation of peptide bonds, thereby polymerizing the amino acids delivered by tRNAs into a polypeptide chain. The nascent polypeptides leave the ribosome through a tunnel in the LSU and interact with protein factors that function in enzymatic processing, targeting, and the membrane insertion of nascent chains at the exit of the ribosomal tunnel. This Schizosaccharomyces pombe (strain 972 / ATCC 24843) (Fission yeast) protein is Large ribosomal subunit protein eL27A (rpl2701).